Here is a 603-residue protein sequence, read N- to C-terminus: Probable methyltransferase PMT4 (603 aa).

Topologically, residues 1–12 are cytoplasmic; that stretch reads MKVASVIGLRPR. The chain crosses the membrane as a helical; Signal-anchor for type II membrane protein span at residues 13–33; sequence ISGLLFLTLGVIALITILVPN. The Lumenal portion of the chain corresponds to 34-603; that stretch reads SDSSSTTSTT…LVCQKPLLKK (570 aa). N96 and N393 each carry an N-linked (GlcNAc...) asparagine glycan.

It belongs to the methyltransferase superfamily.

It localises to the endoplasmic reticulum membrane. The sequence is that of Probable methyltransferase PMT4 from Arabidopsis thaliana (Mouse-ear cress).